The following is a 467-amino-acid chain: tRNA modification GTPase MnmE (467 aa).

R30, E92, and R131 together coordinate (6S)-5-formyl-5,6,7,8-tetrahydrofolate. One can recognise a TrmE-type G domain in the interval 226-388 (GLKVAIIGRP…LEAAILNAVN (163 aa)). N236 lines the K(+) pocket. GTP contacts are provided by residues 236–241 (NVGKSS), 255–261 (TDLPGTT), and 280–283 (DTAG). S240 serves as a coordination point for Mg(2+). Residues T255, L257, and T260 each coordinate K(+). T261 provides a ligand contact to Mg(2+). K467 is a binding site for (6S)-5-formyl-5,6,7,8-tetrahydrofolate.

This sequence belongs to the TRAFAC class TrmE-Era-EngA-EngB-Septin-like GTPase superfamily. TrmE GTPase family. As to quaternary structure, homodimer. Heterotetramer of two MnmE and two MnmG subunits. K(+) is required as a cofactor.

It localises to the cytoplasm. Its function is as follows. Exhibits a very high intrinsic GTPase hydrolysis rate. Involved in the addition of a carboxymethylaminomethyl (cmnm) group at the wobble position (U34) of certain tRNAs, forming tRNA-cmnm(5)s(2)U34. This Trichodesmium erythraeum (strain IMS101) protein is tRNA modification GTPase MnmE.